A 117-amino-acid polypeptide reads, in one-letter code: LIM and senescent cell antigen-like-containing domain protein 3 (117 aa).

The region spanning 70-117 (ATCERCKGGFAPAETIVNSNGELYHEQCFVCAQCFQQFPEGLFYEERT) is the LIM zinc-binding domain.

Detected in testis.

It localises to the cytoplasm. This is LIM and senescent cell antigen-like-containing domain protein 3 (LIMS3) from Homo sapiens (Human).